The following is a 301-amino-acid chain: MSITQTNLDNILPLVARGKVRDIYEVDEKTLLFVATDRISAYDVIMENGIPQKGQLLTQLSEFWFEFLKPYIKTHLIEVDDIFAHLPKVLSEDRYKSQLQGGSLLVRKYKLVPLEVIVRGYITGSAWKVYKKSGTVHGVKAAEGLQESQEFPTPIFTPSTKAEQGEHDENISVEQAEAIVGKELADKIGKVAVELYSKAKGYAAGRGIIIADTKFEFGLDDDNELVLVDEVLTPDSSRFWNAKTYEVGKGQDSYDKQFLRDWLTSNGLAGKEGVSMTEDIATRSRVKYVEAYEALTGKKWE.

Belongs to the SAICAR synthetase family.

The enzyme catalyses 5-amino-1-(5-phospho-D-ribosyl)imidazole-4-carboxylate + L-aspartate + ATP = (2S)-2-[5-amino-1-(5-phospho-beta-D-ribosyl)imidazole-4-carboxamido]succinate + ADP + phosphate + 2 H(+). It participates in purine metabolism; IMP biosynthesis via de novo pathway; 5-amino-1-(5-phospho-D-ribosyl)imidazole-4-carboxamide from 5-amino-1-(5-phospho-D-ribosyl)imidazole-4-carboxylate: step 1/2. This is Phosphoribosylaminoimidazole-succinocarboxamide synthase (ADE1) from Cyberlindnera jadinii (Torula yeast).